The chain runs to 79 residues: U-scoloptoxin(15)-Sm1a (79 aa).

A signal peptide spans 1 to 25 (MKMNVVVLSVVVLLLFIANIQQTEA).

Belongs to the scoloptoxin-15 family. Post-translationally, contains 2 disulfide bonds. Expressed by the venom gland.

It localises to the secreted. This is U-scoloptoxin(15)-Sm1a from Scolopendra morsitans (Tanzanian blue ringleg centipede).